The primary structure comprises 959 residues: Isoleucine--tRNA ligase (959 aa).

Positions 60-70 (PYANGSLHMGH) match the 'HIGH' region motif. Position 569 (glutamate 569) interacts with L-isoleucyl-5'-AMP. The short motif at 610 to 614 (KMSKS) is the 'KMSKS' region element. Lysine 613 contributes to the ATP binding site. Positions 928, 931, 948, and 951 each coordinate Zn(2+).

The protein belongs to the class-I aminoacyl-tRNA synthetase family. IleS type 1 subfamily. As to quaternary structure, monomer. Zn(2+) is required as a cofactor.

The protein localises to the cytoplasm. The catalysed reaction is tRNA(Ile) + L-isoleucine + ATP = L-isoleucyl-tRNA(Ile) + AMP + diphosphate. Its function is as follows. Catalyzes the attachment of isoleucine to tRNA(Ile). As IleRS can inadvertently accommodate and process structurally similar amino acids such as valine, to avoid such errors it has two additional distinct tRNA(Ile)-dependent editing activities. One activity is designated as 'pretransfer' editing and involves the hydrolysis of activated Val-AMP. The other activity is designated 'posttransfer' editing and involves deacylation of mischarged Val-tRNA(Ile). This Gloeothece citriformis (strain PCC 7424) (Cyanothece sp. (strain PCC 7424)) protein is Isoleucine--tRNA ligase.